Consider the following 369-residue polypeptide: tRNA/tmRNA (uracil-C(5))-methyltransferase (369 aa).

Residues Q192, Y221, N226, E242, and D302 each coordinate S-adenosyl-L-methionine. C327 acts as the Nucleophile in catalysis. E361 functions as the Proton acceptor in the catalytic mechanism.

Belongs to the class I-like SAM-binding methyltransferase superfamily. RNA M5U methyltransferase family. TrmA subfamily.

The enzyme catalyses uridine(54) in tRNA + S-adenosyl-L-methionine = 5-methyluridine(54) in tRNA + S-adenosyl-L-homocysteine + H(+). It catalyses the reaction uridine(341) in tmRNA + S-adenosyl-L-methionine = 5-methyluridine(341) in tmRNA + S-adenosyl-L-homocysteine + H(+). Its function is as follows. Dual-specificity methyltransferase that catalyzes the formation of 5-methyluridine at position 54 (m5U54) in all tRNAs, and that of position 341 (m5U341) in tmRNA (transfer-mRNA). The protein is tRNA/tmRNA (uracil-C(5))-methyltransferase of Haemophilus ducreyi (strain 35000HP / ATCC 700724).